Here is a 64-residue protein sequence, read N- to C-terminus: Alpha-mammal toxin AnCra1 (64 aa).

Positions 2-64 (KDGYIVDDVN…VRTKGPGRCN (63 aa)) constitute an LCN-type CS-alpha/beta domain. Cystine bridges form between C12-C63, C16-C36, C22-C46, and C26-C48.

Belongs to the long (4 C-C) scorpion toxin superfamily. Sodium channel inhibitor family. Alpha subfamily. Expressed by the venom gland.

It is found in the secreted. In terms of biological role, alpha toxins bind voltage-independently at site-3 of sodium channels (Nav) and inhibit the inactivation of the activated channels, thereby blocking neuronal transmission. This toxin is active against mammals. The recombinant toxin selectively inhibits the fast inactivation of hNav1.7/SCN9A channel (EC(50)=136.7 nM). Is potent in inhibiting the fast inactivation of hNav1.7 and has little effect on the steady-state inactivation. In vivo, intravenous injection into mice induces muscle contraction, leading to severe paralysis and death. This Androctonus crassicauda (Arabian fat-tailed scorpion) protein is Alpha-mammal toxin AnCra1.